The primary structure comprises 240 residues: 1-(5-phosphoribosyl)-5-[(5-phosphoribosylamino)methylideneamino] imidazole-4-carboxamide isomerase (240 aa).

Residue Asp-8 is the Proton acceptor of the active site. The Proton donor role is filled by Asp-129.

It belongs to the HisA/HisF family.

It is found in the cytoplasm. The enzyme catalyses 1-(5-phospho-beta-D-ribosyl)-5-[(5-phospho-beta-D-ribosylamino)methylideneamino]imidazole-4-carboxamide = 5-[(5-phospho-1-deoxy-D-ribulos-1-ylimino)methylamino]-1-(5-phospho-beta-D-ribosyl)imidazole-4-carboxamide. It functions in the pathway amino-acid biosynthesis; L-histidine biosynthesis; L-histidine from 5-phospho-alpha-D-ribose 1-diphosphate: step 4/9. This Clostridioides difficile (strain 630) (Peptoclostridium difficile) protein is 1-(5-phosphoribosyl)-5-[(5-phosphoribosylamino)methylideneamino] imidazole-4-carboxamide isomerase.